Consider the following 125-residue polypeptide: Small ribosomal subunit protein uS13 (125 aa).

Residues 93–125 (RAGLPVRGQRTRTNARTRRGARKTVAGKKKATR) are disordered. The span at 101-125 (QRTRTNARTRRGARKTVAGKKKATR) shows a compositional bias: basic residues.

This sequence belongs to the universal ribosomal protein uS13 family. In terms of assembly, part of the 30S ribosomal subunit. Forms a loose heterodimer with protein S19. Forms two bridges to the 50S subunit in the 70S ribosome.

Its function is as follows. Located at the top of the head of the 30S subunit, it contacts several helices of the 16S rRNA. In the 70S ribosome it contacts the 23S rRNA (bridge B1a) and protein L5 of the 50S subunit (bridge B1b), connecting the 2 subunits; these bridges are implicated in subunit movement. Contacts the tRNAs in the A and P-sites. The chain is Small ribosomal subunit protein uS13 from Synechococcus elongatus (strain ATCC 33912 / PCC 7942 / FACHB-805) (Anacystis nidulans R2).